The following is a 411-amino-acid chain: MEFRYDFSDYKKSDFDPKAQAERVLISVHADSDVNEDKEVARKRLGYALKEVERQITDLIVHEETTLTKNVSSSLNAQSYLQDIEGKLEQLMLVYERIRSLVVIPSENLGPLHEAIVNLHSTYMTLYWLGEFFGIQAKLFPLFQGSINENEKLSRYYQASLLLQESDQLLSRFPLMKRQSSVSLLLKLNITNRSRIIKETSSYLLSQEDQLSFSVNSNGFTNACSVLYMLDKYLLEQDLTRLLSSRIQKAIIQFDSIFQLSPTTRRLLHNSTDPSAANSTIWSKFEDGWYQISKIGAQCVFWERSLQKANICNPDYPNLLEYFQMQPNFILDGATICIYFFKELAISISSKMQMLDRRDPILLRVFRSDFQRVTHIVEQAIARSSSEIVNKDTRECSIVMNSLRVLAPKNP.

The protein belongs to the COG5 family. As to quaternary structure, component of the conserved oligomeric Golgi (COG) complex which consists of eight different proteins cog1-cog8.

The protein localises to the cytoplasm. Its subcellular location is the golgi apparatus membrane. Acts as essential component of the peripheral membrane COG complex that is involved in intra-Golgi protein trafficking. COG is located at the cis-Golgi, and regulates tethering of retrograde intra-Golgi vesicles and possibly a number of other membrane trafficking events. The protein is Conserved oligomeric Golgi complex subunit 5 (cog5) of Schizosaccharomyces pombe (strain 972 / ATCC 24843) (Fission yeast).